The sequence spans 360 residues: uncharacterized protein (360 aa).

It to P.multocida PM1082.

This is an uncharacterized protein from Pasteurella multocida (strain Pm70).